We begin with the raw amino-acid sequence, 753 residues long: Elongin-A2 (753 aa).

Residues Ser5 to Asp80 enclose the TFIIS N-terminal domain. 3 disordered regions span residues Asp80–Ser245, Glu261–Thr453, and Leu477–Phe497. 2 stretches are compositionally biased toward basic and acidic residues: residues His147 to Cys157 and Ala271 to Gly285. The segment covering Lys306–Arg317 has biased composition (basic residues). The segment covering Ser333–Glu348 has biased composition (basic and acidic residues). Residues Glu366–Glu377 are compositionally biased toward acidic residues. Basic and acidic residues predominate over residues Asp409 to Lys428. The activation domain stretch occupies residues Glu500 to Glu659. Positions Thr528–Leu537 are BC-box. The interval Thr528–Leu537 is interacting with Elongin BC complex. Residues Thr650–Val735 are disordered. A compositionally biased stretch (basic and acidic residues) spans Thr654–Gly663. The segment covering Gly680 to Ser700 has biased composition (low complexity).

Heterotrimer of an A (ELOA, ELOA2 or ELOA3P), ELOB and ELOC subunit. Specifically expressed in testis.

It localises to the nucleus. Its function is as follows. SIII, also known as elongin, is a general transcription elongation factor that increases the RNA polymerase II transcription elongation past template-encoded arresting sites. Subunit A2 is transcriptionally active but its transcription activity is not enhanced by binding to the dimeric complex of the SIII regulatory subunits B and C (elongin BC complex). This is Elongin-A2 from Homo sapiens (Human).